The following is a 341-amino-acid chain: tRNA N6-adenosine threonylcarbamoyltransferase (341 aa).

2 residues coordinate Fe cation: His-111 and His-115. Residues Leu-134 to Gly-138, Asp-167, Gly-180, and Asn-276 contribute to the substrate site. Asp-304 lines the Fe cation pocket.

It belongs to the KAE1 / TsaD family. Fe(2+) is required as a cofactor.

It localises to the cytoplasm. It catalyses the reaction L-threonylcarbamoyladenylate + adenosine(37) in tRNA = N(6)-L-threonylcarbamoyladenosine(37) in tRNA + AMP + H(+). Functionally, required for the formation of a threonylcarbamoyl group on adenosine at position 37 (t(6)A37) in tRNAs that read codons beginning with adenine. Is involved in the transfer of the threonylcarbamoyl moiety of threonylcarbamoyl-AMP (TC-AMP) to the N6 group of A37, together with TsaE and TsaB. TsaD likely plays a direct catalytic role in this reaction. The chain is tRNA N6-adenosine threonylcarbamoyltransferase from Pseudomonas fluorescens (strain Pf0-1).